A 127-amino-acid chain; its full sequence is MDVFKKGFSIAKEGVVGAVEKTKQGVTEAAEKTKEGVMYVGAKTKEGVVQSVTSVAEKTKEQANAVSEAVVSSVNTVATKTVEEVENIAVTSGVVHKEALKQPVPSQEDEAAKAEEQVAEETKSGGD.

2 repeat units span residues 20–30 (EKTKQGVTEAA) and 31–41 (EKTKEGVMYVG). The tract at residues 20 to 67 (EKTKQGVTEAAEKTKEGVMYVGAKTKEGVVQSVTSVAEKTKEQANAVS) is 4 X 11 AA tandem repeats of [EGSA]-K-T-K-[EQ]-[GQ]-V-X(4). The stretch at 42–56 (AKTKEGVVQSVTSVA) is one 3; approximate repeat. Repeat unit 4 spans residues 57–67 (EKTKEQANAVS). Phosphoserine is present on residues Ser-67, Ser-72, and Ser-124. Residues 99 to 127 (ALKQPVPSQEDEAAKAEEQVAEETKSGGD) form a disordered region. Residues 110–127 (EAAKAEEQVAEETKSGGD) are compositionally biased toward basic and acidic residues.

The protein belongs to the synuclein family. May be a centrosome-associated protein. Interacts with MYOC; affects its secretion and its aggregation. Post-translationally, phosphorylated by BARK1 and GRK5. Predominantly expressed in retina (predominantly in outer nuclear layer, also in inner segment of photoreceptor cells, some individual cells located in the inner nuclear layer, inner plexiform layer and in nerve fiber layer). Also found in brain and heart.

It is found in the cytoplasm. The protein localises to the perinuclear region. It localises to the cytoskeleton. The protein resides in the microtubule organizing center. Its subcellular location is the centrosome. It is found in the spindle. In terms of biological role, plays a role in neurofilament network integrity. May be involved in modulating axonal architecture during development and in the adult. In vitro, increases the susceptibility of neurofilament-H to calcium-dependent proteases. May also function in modulating the keratin network in skin. Activates the MAPK and Elk-1 signal transduction pathway. The chain is Gamma-synuclein (SNCG) from Bos taurus (Bovine).